A 190-amino-acid polypeptide reads, in one-letter code: Large ribosomal subunit protein uL22 (190 aa).

Residues S111–K190 are disordered. Residues I125 to A147 are compositionally biased toward basic and acidic residues. Over residues A167–R178 the composition is skewed to low complexity.

The protein belongs to the universal ribosomal protein uL22 family. Part of the 50S ribosomal subunit.

This protein binds specifically to 23S rRNA; its binding is stimulated by other ribosomal proteins, e.g. L4, L17, and L20. It is important during the early stages of 50S assembly. It makes multiple contacts with different domains of the 23S rRNA in the assembled 50S subunit and ribosome. Functionally, the globular domain of the protein is located near the polypeptide exit tunnel on the outside of the subunit, while an extended beta-hairpin is found that lines the wall of the exit tunnel in the center of the 70S ribosome. This is Large ribosomal subunit protein uL22 from Helicobacter hepaticus (strain ATCC 51449 / 3B1).